Reading from the N-terminus, the 231-residue chain is ATP-dependent dethiobiotin synthetase BioD (231 aa).

12 to 17 (DVGKTV) is an ATP binding site. T16 lines the Mg(2+) pocket. K37 is an active-site residue. Residue T41 coordinates substrate. Residues D50, 109 to 112 (EGAG), 170 to 171 (GS), and 200 to 202 (PAG) contribute to the ATP site. D50 and E109 together coordinate Mg(2+).

The protein belongs to the dethiobiotin synthetase family. As to quaternary structure, homodimer. Mg(2+) is required as a cofactor.

It localises to the cytoplasm. The enzyme catalyses (7R,8S)-7,8-diammoniononanoate + CO2 + ATP = (4R,5S)-dethiobiotin + ADP + phosphate + 3 H(+). It functions in the pathway cofactor biosynthesis; biotin biosynthesis; biotin from 7,8-diaminononanoate: step 1/2. Its function is as follows. Catalyzes a mechanistically unusual reaction, the ATP-dependent insertion of CO2 between the N7 and N8 nitrogen atoms of 7,8-diaminopelargonic acid (DAPA, also called 7,8-diammoniononanoate) to form a ureido ring. This is ATP-dependent dethiobiotin synthetase BioD from Rhodococcus jostii (strain RHA1).